The primary structure comprises 175 residues: Large ribosomal subunit protein uL6 (175 aa).

The protein belongs to the universal ribosomal protein uL6 family. As to quaternary structure, part of the 50S ribosomal subunit.

This protein binds to the 23S rRNA, and is important in its secondary structure. It is located near the subunit interface in the base of the L7/L12 stalk, and near the tRNA binding site of the peptidyltransferase center. The protein is Large ribosomal subunit protein uL6 of Xanthomonas axonopodis pv. citri (strain 306).